Reading from the N-terminus, the 349-residue chain is MSKIRVLSVDDSALMRQIMTEIINSHSDMEMVATAPDPLVARDLIKKFNPDVLTLDVEMPRMDGLDFLEKLMRLRPMPVVMVSSLTGKGSEVTLRALELGAIDFVTKPQLGIREGMLAYNEMIAEKVRTAAKASLAAHKPLSAPTTLKAGPLLSSEKLIAIGASTGGTEAIRHVLQPLPLSSPALLITQHMPPGFTRSFADRLNKLCQIGVKEAEDGERVLPGHAYIAPGDRHMELSRSGANYQIKIHDGPAVNRHRPSVDVLFHSVAKQAGRNAVGVILTGMGNDGAAGMLAMRQAGAWTLAQNEASCVVFGMPREAINMGGVCEVVDLSQVSQQMLAKISAGQAIRI.

One can recognise a Response regulatory domain in the interval 5–122 (RVLSVDDSAL…REGMLAYNEM (118 aa)). Aspartate 56 bears the 4-aspartylphosphate mark. The CheB-type methylesterase domain occupies 152-344 (LLSSEKLIAI…QQMLAKISAG (193 aa)). Residues serine 164, histidine 190, and aspartate 286 contribute to the active site.

The protein belongs to the CheB family. As to quaternary structure, interacts with CheA. Binds to a C-terminal pentapeptide sequence carried by certain receptors. In terms of processing, phosphorylated by CheA. Phosphorylation of the N-terminal regulatory domain activates the methylesterase activity.

Its subcellular location is the cytoplasm. The enzyme catalyses [protein]-L-glutamate 5-O-methyl ester + H2O = L-glutamyl-[protein] + methanol + H(+). It carries out the reaction L-glutaminyl-[protein] + H2O = L-glutamyl-[protein] + NH4(+). With respect to regulation, methylesterase activity is activated via phosphorylation in response to negative chemotactic stimuli and is inhibited in the presence of attractants. Activation requires both CheA and CheW. Functionally, involved in chemotaxis. Part of a chemotaxis signal transduction system that modulates chemotaxis in response to various stimuli. Catalyzes the demethylation of specific methylglutamate residues introduced into the chemoreceptors (methyl-accepting chemotaxis proteins or MCP) by CheR. Also mediates the irreversible deamidation of specific glutamine residues to glutamic acid. Catalyzes its own deactivation by removing the activating phosphoryl group. In Escherichia coli (strain K12), this protein is Protein-glutamate methylesterase/protein-glutamine glutaminase.